The sequence spans 58 residues: UPF0391 membrane protein GM21_0108 (58 aa).

The next 2 membrane-spanning stretches (helical) occupy residues 4–24 (WALI…GGIA) and 33–53 (VLFY…LLAG).

The protein belongs to the UPF0391 family.

It localises to the cell membrane. This Geobacter sp. (strain M21) protein is UPF0391 membrane protein GM21_0108.